The sequence spans 213 residues: tRNA (guanine-N(7)-)-methyltransferase (213 aa).

S-adenosyl-L-methionine contacts are provided by Glu44, Glu69, Asp96, and Asp118. The active site involves Asp118. Substrate contacts are provided by residues Lys122, Asp154, and 192–195 (TEYE).

It belongs to the class I-like SAM-binding methyltransferase superfamily. TrmB family.

It catalyses the reaction guanosine(46) in tRNA + S-adenosyl-L-methionine = N(7)-methylguanosine(46) in tRNA + S-adenosyl-L-homocysteine. Its pathway is tRNA modification; N(7)-methylguanine-tRNA biosynthesis. Its function is as follows. Catalyzes the formation of N(7)-methylguanine at position 46 (m7G46) in tRNA. This is tRNA (guanine-N(7)-)-methyltransferase from Limosilactobacillus reuteri (strain DSM 20016) (Lactobacillus reuteri).